Consider the following 150-residue polypeptide: MSHLVHLTVLLLVGILCLGATSAKPHEEINRDHAAELANECKAETGATDEDVEQLMSHDLPERHEAKCLRACVMKKLQIMDESGKLNKEHAIELVKVMSKHDAEKEDAPAEVVAKCEAIETPEDHCDAAFAYEECIYEQMKEHGLELEEH.

The first 23 residues, 1–23 (MSHLVHLTVLLLVGILCLGATSA), serve as a signal peptide directing secretion. Intrachain disulfides connect cysteine 41–cysteine 72, cysteine 68–cysteine 126, and cysteine 116–cysteine 135.

Belongs to the PBP/GOBP family. As to expression, expressed in the antenna, mostly on the anterior surface of the third antennal segment. Also detected in the maxillary palps and in cells at the bases of the taste hairs on the proboscis and internal taste organs of the head.

The protein resides in the secreted. This Drosophila melanogaster (Fruit fly) protein is General odorant-binding protein 19d (Obp19d).